A 215-amino-acid polypeptide reads, in one-letter code: Large ribosomal subunit protein uL1 (215 aa).

This sequence belongs to the universal ribosomal protein uL1 family. In terms of assembly, part of the 50S ribosomal subunit.

Functionally, binds directly to 23S rRNA. Probably involved in E site tRNA release. In terms of biological role, protein L1 is also a translational repressor protein, it controls the translation of its operon by binding to its mRNA. The protein is Large ribosomal subunit protein uL1 of Archaeoglobus fulgidus (strain ATCC 49558 / DSM 4304 / JCM 9628 / NBRC 100126 / VC-16).